Here is a 1122-residue protein sequence, read N- to C-terminus: Maestro heat-like repeat-containing protein family member 7 (1122 aa).

Disordered regions lie at residues 1–144 (MALS…LSED) and 183–203 (SHTISRQSSQTPLLLPSNTSL). The segment covering 33–65 (TTPRPTPDLTLAPLPAHGVALAPALHPALSPDP) has biased composition (low complexity). Composition is skewed to polar residues over residues 75–95 (DISNPNASGAATPSSIQINTA), 120–136 (PVPSLSSTQATVLSPEN), and 184–203 (HTISRQSSQTPLLLPSNTSL). N200, N210, N255, N267, and N296 each carry an N-linked (GlcNAc...) asparagine glycan. The disordered stretch occupies residues 246–265 (WNTGSKGSVNVTSNSQPRSG). S356 is modified (phosphoserine). Residues 363-385 (FRSPPEGTSEDAKANESEKRDHD) form a disordered region. A compositionally biased stretch (basic and acidic residues) spans 372-385 (EDAKANESEKRDHD). N-linked (GlcNAc...) asparagine glycans are attached at residues N541 and N546. The next 2 helical transmembrane spans lie at 548–568 (TLVTLPFFVSSGFPTLGLLLG) and 722–742 (LLPISFLASSFMTEVVVALLM). HEAT repeat units follow at residues 913-950 (QELCRILYLLIPLLERGDERHKITATAFFVELFRMEQV), 992-1029 (TKVQGLLPSMVKSLKNMDGVLVMEAVHDLKTIFKGQAK), 1035-1072 (SVYIEMLQTLLPHFIDARETVRTSCINTYGKVVKKLRM), and 1080-1117 (EQLTSTLMPLLFIIQEGNAKVSQHFPLEFHTAGIFFLL).

It localises to the membrane. This Rattus norvegicus (Rat) protein is Maestro heat-like repeat-containing protein family member 7 (Mroh7).